A 320-amino-acid polypeptide reads, in one-letter code: Glyoxylate/hydroxypyruvate reductase B (320 aa).

Active-site residues include arginine 233 and glutamate 262. Residue histidine 281 is the Proton donor of the active site.

It belongs to the D-isomer specific 2-hydroxyacid dehydrogenase family. GhrB subfamily. Homodimer.

It is found in the cytoplasm. The enzyme catalyses glycolate + NADP(+) = glyoxylate + NADPH + H(+). It carries out the reaction (R)-glycerate + NAD(+) = 3-hydroxypyruvate + NADH + H(+). The catalysed reaction is (R)-glycerate + NADP(+) = 3-hydroxypyruvate + NADPH + H(+). Functionally, catalyzes the NADPH-dependent reduction of glyoxylate and hydroxypyruvate into glycolate and glycerate, respectively. The chain is Glyoxylate/hydroxypyruvate reductase B from Pectobacterium atrosepticum (strain SCRI 1043 / ATCC BAA-672) (Erwinia carotovora subsp. atroseptica).